Consider the following 118-residue polypeptide: MITLYNTLTRQKETFEPIEPGKVKMYVCGPTVYNYIHIGNARPAINYDVVRRYFEYQGYEVIYVSNFTDVDDKLIKRSKELDESVETITDRYIKAFYEDVGALNVKKATSNPRVMNHM.

Cysteine 28 lines the Zn(2+) pocket. A 'HIGH' region motif is present at residues 30–40; it reads PTVYNYIHIGN.

The protein belongs to the class-I aminoacyl-tRNA synthetase family. In terms of assembly, monomer. Requires Zn(2+) as cofactor.

It localises to the cytoplasm. It carries out the reaction tRNA(Cys) + L-cysteine + ATP = L-cysteinyl-tRNA(Cys) + AMP + diphosphate. The chain is Cysteine--tRNA ligase (cysS) from Staphylococcus xylosus.